Here is a 244-residue protein sequence, read N- to C-terminus: Small ribosomal subunit protein uS2 (244 aa).

It belongs to the universal ribosomal protein uS2 family.

This Endomicrobium trichonymphae protein is Small ribosomal subunit protein uS2.